Reading from the N-terminus, the 252-residue chain is NADP-dependent (R)-specific alcohol dehydrogenase (252 aa).

NADP(+) is bound by residues 16-19 (TLGI), 39-40 (RH), 63-64 (DA), Asn-90, Tyr-156, Lys-160, and 191-195 (IKTPL). Catalysis depends on Tyr-156, which acts as the Proton donor/acceptor. Mg(2+) is bound at residue Gln-252.

The protein belongs to the short-chain dehydrogenases/reductases (SDR) family. In terms of assembly, homotetramer. Mg(2+) serves as cofactor.

It catalyses the reaction a secondary alcohol + NADP(+) = a ketone + NADPH + H(+). The enzyme catalyses acetophenone + NADPH + H(+) = (R)-1-phenylethanol + NADP(+). The catalysed reaction is 2,5-hexanedione + 2 NADPH + 2 H(+) = (2R,5R)-hexanediol + 2 NADP(+). It carries out the reaction ethyl 3-oxobutanoate + NADPH + H(+) = ethyl (R)-3-hydroxybutanoate + NADP(+). It catalyses the reaction 2-octanone + NADPH + H(+) = (2R)-octan-2-ol + NADP(+). NADP-dependent (R)-specific alcohol dehydrogenase (ADH) with a broad substrate specificity, able to catalyze in vitro the stereoselective reduction of several aliphatic and aromatic ketones as well as beta-keto esters to the corresponding enantiomerically pure alcohols. The chain is NADP-dependent (R)-specific alcohol dehydrogenase from Lentilactobacillus kefiri (Lactobacillus kefiri).